Consider the following 302-residue polypeptide: MADELEFIEQGLQRSQIDEFFAEELARAGYGGMELAPTPMGMQIVLKAEKPGMVIGKGGKNIRKITTQLEERFDLEDPQIDVQEVEEPDLNAQIVADRLANALERGWYFRKAGHTTIDRIMESGALGAEIVLSGKVTGNRGRVEKFNRGYIKHNGEPAEEIVDHGKGVAVMKLGTIGVNVKIIPPNAELPDDFEIQEDADIEDLVVDEAEAGEDLEELLEGEDADAEDADADAAAEPESEPADFEDEEVIETDDDVEEELDELADAVEGEDEDDEFSDVDDEAADTAEDLLDEMDDEDGGAE.

The KH type-2 domain occupies I17–E86. A disordered region spans residues E222–E302.

It belongs to the universal ribosomal protein uS3 family. In terms of assembly, part of the 30S ribosomal subunit.

Binds the lower part of the 30S subunit head. The chain is Small ribosomal subunit protein uS3 from Halobacterium salinarum (strain ATCC 700922 / JCM 11081 / NRC-1) (Halobacterium halobium).